Consider the following 461-residue polypeptide: ATP synthase subunit beta 2 (461 aa).

151-158 (GGAGVGKT) serves as a coordination point for ATP.

This sequence belongs to the ATPase alpha/beta chains family. As to quaternary structure, F-type ATPases have 2 components, CF(1) - the catalytic core - and CF(0) - the membrane proton channel. CF(1) has five subunits: alpha(3), beta(3), gamma(1), delta(1), epsilon(1). CF(0) has three main subunits: a(1), b(2) and c(9-12). The alpha and beta chains form an alternating ring which encloses part of the gamma chain. CF(1) is attached to CF(0) by a central stalk formed by the gamma and epsilon chains, while a peripheral stalk is formed by the delta and b chains.

It is found in the cell inner membrane. It catalyses the reaction ATP + H2O + 4 H(+)(in) = ADP + phosphate + 5 H(+)(out). Its function is as follows. Produces ATP from ADP in the presence of a proton gradient across the membrane. The catalytic sites are hosted primarily by the beta subunits. The chain is ATP synthase subunit beta 2 from Photobacterium profundum (strain SS9).